Consider the following 785-residue polypeptide: Phenylalanine--tRNA ligase beta subunit (785 aa).

Positions 39-150 constitute a tRNA-binding domain; the sequence is RTWAAGVVVG…ASLPLGLDVG (112 aa). The B5 domain maps to 400-476; sequence RENRVVSLRP…RVVGYDRFAP (77 aa). Mg(2+)-binding residues include D454, D460, E463, and E464. Positions 692–784 constitute an FDX-ACB domain; that stretch reads SPFPPAARDL…LAERYSVDLR (93 aa).

This sequence belongs to the phenylalanyl-tRNA synthetase beta subunit family. Type 1 subfamily. In terms of assembly, tetramer of two alpha and two beta subunits. Mg(2+) is required as a cofactor.

The protein localises to the cytoplasm. The catalysed reaction is tRNA(Phe) + L-phenylalanine + ATP = L-phenylalanyl-tRNA(Phe) + AMP + diphosphate + H(+). This Gloeobacter violaceus (strain ATCC 29082 / PCC 7421) protein is Phenylalanine--tRNA ligase beta subunit.